Reading from the N-terminus, the 234-residue chain is MTYKRVLLKLSGEALMGEKPYGIDPAIVQSIAEDVSKVVGNNIQLAIVVGGGNIFRGLKGSADGMDRATADYVGMLATVMNAISLQDGLERVGVATRVQTAIEMQEIAEPYIRRRAMRHLEKGRVVVFGGGCGNPFFTTDTTAALRAAEINAEVVMKATKVDGVYNCDPNKFQDAKKYTNLSYQQVLSDEIAVMDSTAIALCKDNNIPIMVFDIFKKGNISKAVAGEAIGSLIS.

9 to 12 lines the ATP pocket; sequence KLSG. Position 51 (glycine 51) interacts with UMP. ATP-binding residues include glycine 52 and arginine 56. Residues aspartate 71 and 132 to 139 each bind UMP; that span reads CGNPFFTT. 3 residues coordinate ATP: threonine 159, tyrosine 165, and aspartate 168.

It belongs to the UMP kinase family. In terms of assembly, homohexamer.

It localises to the cytoplasm. It carries out the reaction UMP + ATP = UDP + ADP. It functions in the pathway pyrimidine metabolism; CTP biosynthesis via de novo pathway; UDP from UMP (UMPK route): step 1/1. Inhibited by UTP. Its function is as follows. Catalyzes the reversible phosphorylation of UMP to UDP. This is Uridylate kinase from Prochlorococcus marinus (strain MIT 9312).